The following is a 249-amino-acid chain: tRNA (guanine-N(1)-)-methyltransferase (249 aa).

S-adenosyl-L-methionine contacts are provided by residues Gly113 and 133–138 (IGDFVL).

It belongs to the RNA methyltransferase TrmD family. As to quaternary structure, homodimer.

The protein resides in the cytoplasm. The enzyme catalyses guanosine(37) in tRNA + S-adenosyl-L-methionine = N(1)-methylguanosine(37) in tRNA + S-adenosyl-L-homocysteine + H(+). Its function is as follows. Specifically methylates guanosine-37 in various tRNAs. This Photobacterium profundum (strain SS9) protein is tRNA (guanine-N(1)-)-methyltransferase.